Here is a 91-residue protein sequence, read N- to C-terminus: Histone H1, sperm (91 aa).

The interval 1–25 is disordered; the sequence is PGSPQKRAASPRKSPRKGSPKKSPM. The span at 9-20 shows a compositional bias: basic residues; that stretch reads ASPRKSPRKGSP. Positions 18–91 constitute an H15 domain; it reads GSPKKSPMIR…TGATGRFRVG (74 aa).

It belongs to the histone H1/H5 family.

It is found in the nucleus. It localises to the chromosome. Its function is as follows. Histones H1 are necessary for the condensation of nucleosome chains into higher-order structures. This chain is Histone H1, sperm, found in Sphaerechinus granularis (Purple sea urchin).